A 78-amino-acid polypeptide reads, in one-letter code: NAD(P)H-quinone oxidoreductase subunit O (78 aa).

It belongs to the complex I NdhO subunit family. As to quaternary structure, NDH-1 can be composed of about 15 different subunits; different subcomplexes with different compositions have been identified which probably have different functions.

The protein localises to the cellular thylakoid membrane. It catalyses the reaction a plastoquinone + NADH + (n+1) H(+)(in) = a plastoquinol + NAD(+) + n H(+)(out). The catalysed reaction is a plastoquinone + NADPH + (n+1) H(+)(in) = a plastoquinol + NADP(+) + n H(+)(out). Its function is as follows. NDH-1 shuttles electrons from an unknown electron donor, via FMN and iron-sulfur (Fe-S) centers, to quinones in the respiratory and/or the photosynthetic chain. The immediate electron acceptor for the enzyme in this species is believed to be plastoquinone. Couples the redox reaction to proton translocation, and thus conserves the redox energy in a proton gradient. Cyanobacterial NDH-1 also plays a role in inorganic carbon-concentration. The polypeptide is NAD(P)H-quinone oxidoreductase subunit O (Prochlorococcus marinus (strain AS9601)).